The chain runs to 380 residues: Protein kinase ORF15 (380 aa).

In terms of domain architecture, Protein kinase spans 93 to 371; the sequence is FIPVKVAGCL…LLIAQLTKFI (279 aa). Residue K118 coordinates ATP. The Proton acceptor role is filled by D217.

It belongs to the protein kinase superfamily. Ser/Thr protein kinase family.

It catalyses the reaction L-seryl-[protein] + ATP = O-phospho-L-seryl-[protein] + ADP + H(+). It carries out the reaction L-threonyl-[protein] + ATP = O-phospho-L-threonyl-[protein] + ADP + H(+). The protein is Protein kinase ORF15 (ORF15) of Ictalurid herpesvirus 1 (strain Auburn) (IcHV-1).